Consider the following 341-residue polypeptide: UDP-3-O-acylglucosamine N-acyltransferase (341 aa).

The active-site Proton acceptor is the H241.

Belongs to the transferase hexapeptide repeat family. LpxD subfamily. As to quaternary structure, homotrimer.

It carries out the reaction a UDP-3-O-[(3R)-3-hydroxyacyl]-alpha-D-glucosamine + a (3R)-hydroxyacyl-[ACP] = a UDP-2-N,3-O-bis[(3R)-3-hydroxyacyl]-alpha-D-glucosamine + holo-[ACP] + H(+). The protein operates within bacterial outer membrane biogenesis; LPS lipid A biosynthesis. Functionally, catalyzes the N-acylation of UDP-3-O-acylglucosamine using 3-hydroxyacyl-ACP as the acyl donor. Is involved in the biosynthesis of lipid A, a phosphorylated glycolipid that anchors the lipopolysaccharide to the outer membrane of the cell. The chain is UDP-3-O-acylglucosamine N-acyltransferase from Saccharophagus degradans (strain 2-40 / ATCC 43961 / DSM 17024).